A 147-amino-acid polypeptide reads, in one-letter code: MVTTLIAVIGTLAGTGLAGLLQHRTARTTRDDSRRDAAVQAVAALAAALADHRRAMWVREDLRLTGASPEAYEAARTESHATRSAITAPLTTVSVLAPALAPAATAAAQAAYDLRAAADRTALTTDRDRAMAAADGLVAAAARRFGA.

Residues 1-20 (MVTTLIAVIGTLAGTGLAGL) form a hydrophobic region.

Functionally, involved in plasmid transfer. The chain is Protein KilB (kilB) from Streptomyces lividans.